An 84-amino-acid chain; its full sequence is Putative membrane protein insertion efficiency factor (84 aa).

The protein belongs to the UPF0161 family.

The protein localises to the cell inner membrane. Its function is as follows. Could be involved in insertion of integral membrane proteins into the membrane. The chain is Putative membrane protein insertion efficiency factor from Shewanella frigidimarina (strain NCIMB 400).